We begin with the raw amino-acid sequence, 199 residues long: Holliday junction branch migration complex subunit RuvA (199 aa).

The segment at 1 to 62 (MIAYIKGLLA…EDGIQFFGFA (62 aa)) is domain I. The tract at residues 63–141 (KEDEKECFLL…GMAAVEHSTL (79 aa)) is domain II. The interval 142 to 152 (QQSVITTGSGD) is flexible linker. The tract at residues 152–199 (DEAVEALLALGYSQGEARDAVKKAQKSAPEEDLSALIKIALKELAPSR) is domain III.

It belongs to the RuvA family. As to quaternary structure, homotetramer. Forms an RuvA(8)-RuvB(12)-Holliday junction (HJ) complex. HJ DNA is sandwiched between 2 RuvA tetramers; dsDNA enters through RuvA and exits via RuvB. An RuvB hexamer assembles on each DNA strand where it exits the tetramer. Each RuvB hexamer is contacted by two RuvA subunits (via domain III) on 2 adjacent RuvB subunits; this complex drives branch migration. In the full resolvosome a probable DNA-RuvA(4)-RuvB(12)-RuvC(2) complex forms which resolves the HJ.

The protein resides in the cytoplasm. The RuvA-RuvB-RuvC complex processes Holliday junction (HJ) DNA during genetic recombination and DNA repair, while the RuvA-RuvB complex plays an important role in the rescue of blocked DNA replication forks via replication fork reversal (RFR). RuvA specifically binds to HJ cruciform DNA, conferring on it an open structure. The RuvB hexamer acts as an ATP-dependent pump, pulling dsDNA into and through the RuvAB complex. HJ branch migration allows RuvC to scan DNA until it finds its consensus sequence, where it cleaves and resolves the cruciform DNA. This Desulforamulus reducens (strain ATCC BAA-1160 / DSM 100696 / MI-1) (Desulfotomaculum reducens) protein is Holliday junction branch migration complex subunit RuvA.